The primary structure comprises 122 residues: Small ribosomal subunit protein uS13 (122 aa).

The interval 95–122 (GLPVRGQRTKTNARTRKGPKKTIAGKKK) is disordered.

Belongs to the universal ribosomal protein uS13 family. As to quaternary structure, part of the 30S ribosomal subunit. Forms a loose heterodimer with protein S19. Forms two bridges to the 50S subunit in the 70S ribosome.

Its function is as follows. Located at the top of the head of the 30S subunit, it contacts several helices of the 16S rRNA. In the 70S ribosome it contacts the 23S rRNA (bridge B1a) and protein L5 of the 50S subunit (bridge B1b), connecting the 2 subunits; these bridges are implicated in subunit movement. Contacts the tRNAs in the A and P-sites. In Corynebacterium diphtheriae (strain ATCC 700971 / NCTC 13129 / Biotype gravis), this protein is Small ribosomal subunit protein uS13.